The following is a 4118-amino-acid chain: BEACH domain-containing protein lvsB (4118 aa).

Positions 1–35 (MNRNFNNINNNNNNNNNYHGYQYHQQQQQQNQQQQ) are disordered. The chain crosses the membrane as a helical span at residues 198-218 (GIPLSFLNFLITILLRILSLP). Positions 236 to 257 (NFSGNNNNNFNNNNHYFNNNHN) are enriched in low complexity. Disordered stretches follow at residues 236 to 267 (NFSGNNNNNFNNNNHYFNNNHNNHNHHYQHHQ), 332 to 382 (PLSS…SKNN), and 621 to 644 (ISSSDNNNNNNNNSDGVNDDKNNN). Over residues 258 to 267 (NHNHHYQHHQ) the composition is skewed to basic residues. Composition is skewed to low complexity over residues 332 to 381 (PLSS…NSKN) and 621 to 636 (ISSSDNNNNNNNNSDG). The helical transmembrane segment at 827–847 (YLVLYMIVTEILSLLLELLVP) threads the bilayer. Over residues 1155–1170 (NGGSISPSSIINNMNS) the composition is skewed to low complexity. 11 disordered regions span residues 1155–1213 (NGGS…FNNN), 1599–1622 (ANTTTNSTTASTTTTTTNSTTAVS), 1643–1681 (NSGISRENSLGGRDSIGSNSSSSSSSSNSGVSSGSSTNL), 1928–1968 (GNFL…ISSS), 2015–2044 (STNNNSNNSNNSNSNNNNNNNNTNYNSNSL), 2537–2574 (RRGSSSSSTNSTTNNNNNNSSTTTTSNNNNNNNENNNE), 2702–2741 (FSPSRSKEKEKEKEKEKEKEKEKEKERERERETTNVTSDS), 2754–2791 (DQSNEESSTTDSDSTSDNNNNNNRNSYSGRNIRGNGIN), 2902–3007 (NTNS…NSNE), 3245–3265 (PLIPDLSTPSTPPSPQNTKDQ), and 3348–3418 (KTTA…NIVK). Low complexity-rich tracts occupy residues 1657 to 1678 (SIGSNSSSSSSSSNSGVSSGSS) and 1935 to 1968 (SSSNNNLRERSINNNNNNNNNSNNNNNNNSISSS). A compositionally biased stretch (low complexity) spans 2540–2571 (SSSSSTNSTTNNNNNNSSTTTTSNNNNNNNEN). A coiled-coil region spans residues 2705-2738 (SRSKEKEKEKEKEKEKEKEKEKERERERETTNVT). The span at 2706–2734 (RSKEKEKEKEKEKEKEKEKEKERERERET) shows a compositional bias: basic and acidic residues. 2 stretches are compositionally biased toward low complexity: residues 2758 to 2791 (EESSTTDSDSTSDNNNNNNRNSYSGRNIRGNGIN) and 2902 to 2947 (NTNS…NSTN). Residues 2948 to 2962 (QTITDTTLSPASSNV) show a composition bias toward polar residues. Low complexity-rich tracts occupy residues 2963–2980 (SISNQSTPISNNNNNNNS) and 2988–3006 (SNINIPPTINISDSNSNSN). In terms of domain architecture, BEACH-type PH spans 3303–3479 (KLGEKVNEVF…DRDIVYDLIM (177 aa)). Over residues 3357-3411 (SNNNNNNNNNNNNNNNNNNNNSNDTTSSINSTTATNTNTTNTTTTNTTTTTTTTN) the composition is skewed to low complexity. The region spanning 3491–3782 (AEVHGNILKM…QIFTKPHPKK (292 aa)) is the BEACH domain. WD repeat units follow at residues 3868 to 3907 (VLNDDIICGDITKNGRLFVTGGTAGTVKVWKRCNNDGTIM), 3924 to 3963 (GHTNSILCVTVSQEYSIIVSGSKDSNCIIWDLNRLTYINS), 3984 to 4027 (TFET…LAKQ), 4029 to 4073 (FVND…KIRT), and 4075 to 4114 (VSKSTITALAVSKDNTQLISGDINGLIECLSSRSFDGYSS).

Its subcellular location is the membrane. It localises to the lysosome. The protein localises to the endosome. Involved in negative regulation of lysosome biogenesis, by limiting the heterotypic fusion of early endosomes and postlysosomal compartments. This is BEACH domain-containing protein lvsB (lvsB) from Dictyostelium discoideum (Social amoeba).